The following is a 349-amino-acid chain: N-formyl peptide receptor 3 (349 aa).

Residues 1–27 (METNFSIPLNETEEVLPEPAGHTVLWI) are Extracellular-facing. Residues asparagine 4 and asparagine 10 are each glycosylated (N-linked (GlcNAc...) asparagine). Residues 28–50 (FSLLVHGVTFIFGVLGNGLVIWV) form a helical membrane-spanning segment. At 51-61 (AGFRMTRTVNT) the chain is on the cytoplasmic side. Residues 62–83 (ICYLNLALADFSFSAILPFHMV) traverse the membrane as a helical segment. Residues 84–100 (SVAMREKWPFGTFLCKL) are Extracellular-facing. Cysteines 98 and 176 form a disulfide. The helical transmembrane segment at 101 to 121 (VHVMIDINLFVSVYLITIIAL) threads the bilayer. The Cytoplasmic portion of the chain corresponds to 122 to 140 (DRCICVLHPAWAQNHRTMS). Residues 141-162 (LAKRVMTGLWILTIVLTLPNFI) traverse the membrane as a helical segment. Residues 163-205 (FWTTISTTNGDTYCIFNYPFWGDTVVERMNVFITMAKVSLILH) are Extracellular-facing. Residues 206-226 (FIIGFSIPMSIITVCYGIIVA) traverse the membrane as a helical segment. Residues 227 to 242 (KIHKKRMTKSSRPLHI) are Cytoplasmic-facing. Residues 243-266 (FTAVVASFFICWFPYELTGILMAV) form a helical membrane-spanning segment. Over 267–286 (WLKEILLNGKYKIILVLINP) the chain is Extracellular. A helical membrane pass occupies residues 287 to 306 (TSSLAFFNSCLNPSLYVFMG). At 307 to 349 (HNFQERLIRSLPTSLERALTEVPDSAQTSNTHTTSASPPEETE) the chain is on the cytoplasmic side. The disordered stretch occupies residues 327–349 (EVPDSAQTSNTHTTSASPPEETE). Residues 331–343 (SAQTSNTHTTSAS) are compositionally biased toward polar residues.

Belongs to the G-protein coupled receptor 1 family.

It is found in the cell membrane. In terms of biological role, low affinity receptor for N-formyl-methionyl peptides, which are powerful neutrophils chemotactic factors. Binding of FMLP to the receptor causes activation of neutrophils. This response is mediated via a G-protein that activates a phosphatidylinositol-calcium second messenger system. The protein is N-formyl peptide receptor 3 (FPR3) of Macaca mulatta (Rhesus macaque).